A 203-amino-acid polypeptide reads, in one-letter code: Ras-related protein Rab5A (203 aa).

18 to 26 (GDVGTGKSS) is a GTP binding site. The Effector region motif lies at 40–48 (QESTIGAAF). GTP-binding positions include 66–70 (DTAGQ), 124–127 (NKAD), and 154–155 (SA). 2 S-geranylgeranyl cysteine lipidation sites follow: Cys-201 and Cys-202.

The protein belongs to the small GTPase superfamily. Rab family. As to quaternary structure, interacts with VPS9A. Interacts with NSF and RBP-L. In terms of tissue distribution, highly expressed in roots. Expressed at low levels in shoots, flowers and grains.

The protein resides in the prevacuolar compartment membrane. The protein localises to the golgi apparatus membrane. Its subcellular location is the cell membrane. It localises to the protein storage vacuole membrane. Plays an important role in intracellular trafficking of seed storage proteins to the protein storage vacuoles (PSVs). Participates in the transport of the proglutelins from the Golgi apparatus to the PSVs in endosperm. Functions cooperatively with VPS9A to regulate post-Golgi dense vesicle-mediated transport of storage proteins to the type II protein bodies (PBII) protein storage vacuoles in developing endosperm. Involved in the maintenance of the general structural organization of the endomembrane system in developing endosperm. Binds GTP in vitro. Forms a quaternary complex with the two glutelin zipcode RNA-binding proteins RBP-L and RBP-P, and the membrane trafficking factor NSF. This quaternay complex carries glutelin mRNAs for active transport on endosomes to the cortical endoplasmic reticulum membrane, and enables endosome-mediated glutelin mRNA transport in endosperm cells. This chain is Ras-related protein Rab5A, found in Oryza sativa subsp. japonica (Rice).